The sequence spans 145 residues: Basic phospholipase A2 cL037 (145 aa).

The first 21 residues, 1–21 (MYPAHLLVLLAVCVSLLGASA), serve as a signal peptide directing secretion. Residues 22 to 27 (ILPLPL) constitute a propeptide that is removed on maturation. 7 disulfide bridges follow: Cys38-Cys98, Cys54-Cys144, Cys56-Cys72, Cys71-Cys125, Cys78-Cys118, Cys87-Cys111, and Cys105-Cys116. Residues Tyr55, Gly57, and Gly59 each contribute to the Ca(2+) site. Residue His75 is part of the active site. Asp76 contacts Ca(2+). Asp119 is an active-site residue.

Belongs to the phospholipase A2 family. Group I subfamily. D49 sub-subfamily. The cofactor is Ca(2+). Expressed by the venom gland.

It localises to the secreted. It carries out the reaction a 1,2-diacyl-sn-glycero-3-phosphocholine + H2O = a 1-acyl-sn-glycero-3-phosphocholine + a fatty acid + H(+). In terms of biological role, PLA2 catalyzes the calcium-dependent hydrolysis of the 2-acyl groups in 3-sn-phosphoglycerides. This Laticauda semifasciata (Black-banded sea krait) protein is Basic phospholipase A2 cL037.